Consider the following 1087-residue polypeptide: Exportin-7 (1087 aa).

The region spanning 30–96 (AEKALVEFTN…RNYVLNYLAT (67 aa)) is the Importin N-terminal domain.

The protein belongs to the exportin family.

It is found in the cytoplasm. The protein localises to the nucleus. Mediates the nuclear export of proteins (cargos) with broad substrate specificity. The sequence is that of Exportin-7 (XPO7) from Gallus gallus (Chicken).